We begin with the raw amino-acid sequence, 456 residues long: Bifunctional protein GlmU (456 aa).

A pyrophosphorylase region spans residues 1 to 229 (MLNSAMSVVI…ISETDGVNNR (229 aa)). Residues 11 to 14 (LAAG), K25, Q76, 81 to 82 (GT), 103 to 105 (YGD), G140, E154, N169, and N227 contribute to the UDP-N-acetyl-alpha-D-glucosamine site. A Mg(2+)-binding site is contributed by D105. N227 contacts Mg(2+). Residues 230–250 (LQLSRLERIYQAEQAEKLLLS) are linker. Positions 251-456 (GVMLRDPARF…QGWQRPVKKK (206 aa)) are N-acetyltransferase. UDP-N-acetyl-alpha-D-glucosamine is bound by residues R333 and K351. The active-site Proton acceptor is H363. Positions 366 and 377 each coordinate UDP-N-acetyl-alpha-D-glucosamine. Residues A380, 386 to 387 (NY), S405, A423, and R440 each bind acetyl-CoA.

It in the N-terminal section; belongs to the N-acetylglucosamine-1-phosphate uridyltransferase family. This sequence in the C-terminal section; belongs to the transferase hexapeptide repeat family. Homotrimer. Mg(2+) serves as cofactor.

It localises to the cytoplasm. It catalyses the reaction alpha-D-glucosamine 1-phosphate + acetyl-CoA = N-acetyl-alpha-D-glucosamine 1-phosphate + CoA + H(+). The catalysed reaction is N-acetyl-alpha-D-glucosamine 1-phosphate + UTP + H(+) = UDP-N-acetyl-alpha-D-glucosamine + diphosphate. The protein operates within nucleotide-sugar biosynthesis; UDP-N-acetyl-alpha-D-glucosamine biosynthesis; N-acetyl-alpha-D-glucosamine 1-phosphate from alpha-D-glucosamine 6-phosphate (route II): step 2/2. It functions in the pathway nucleotide-sugar biosynthesis; UDP-N-acetyl-alpha-D-glucosamine biosynthesis; UDP-N-acetyl-alpha-D-glucosamine from N-acetyl-alpha-D-glucosamine 1-phosphate: step 1/1. It participates in bacterial outer membrane biogenesis; LPS lipid A biosynthesis. Catalyzes the last two sequential reactions in the de novo biosynthetic pathway for UDP-N-acetylglucosamine (UDP-GlcNAc). The C-terminal domain catalyzes the transfer of acetyl group from acetyl coenzyme A to glucosamine-1-phosphate (GlcN-1-P) to produce N-acetylglucosamine-1-phosphate (GlcNAc-1-P), which is converted into UDP-GlcNAc by the transfer of uridine 5-monophosphate (from uridine 5-triphosphate), a reaction catalyzed by the N-terminal domain. The chain is Bifunctional protein GlmU from Salmonella agona (strain SL483).